The primary structure comprises 330 residues: MAELLLVETPIPQQKHYESKPFPAVISPPSASIPIPALSLPLFTQTIKTQKHYLDSLLHESGAVLFRGFPVNSADDFNDVVEAFGFDELPYVGGAAPRTSVVGRVFTANESPPDQKIPFHHEMAQVREFPSKLFFYCEIEPKCGGETPIVLSHVVYERMKDKHPEFVQRLEEHGLLYVRVLGEDDDPSSPIGRGWKSTFLTHDKNLAEQRAVDLGMKLEWTEDGGAKTVMGPIPAIKYDESRNRKVWFNSMVAAYTGWEDKRNDPRKAVTFGDGKPLPADIVHDCLRILEEECVAVPWQRGDVLLIDNWAVLHSRRPFDPPRRVLASLCK.

Alanine 2 carries the post-translational modification N-acetylalanine. The Fe cation site is built by histidine 120, glutamate 122, and histidine 313.

It depends on Fe cation as a cofactor.

This Arabidopsis thaliana (Mouse-ear cress) protein is Clavaminate synthase-like protein At3g21360.